Here is a 237-residue protein sequence, read N- to C-terminus: Small ribosomal subunit protein uS3 (237 aa).

Residues 39 to 107 (IRAYLMEELK…ETHLNIVEVR (69 aa)) enclose the KH type-2 domain. The interval 213-237 (MASERRATESDNQGGSGRERRRENA) is disordered.

This sequence belongs to the universal ribosomal protein uS3 family. In terms of assembly, part of the 30S ribosomal subunit. Forms a tight complex with proteins S10 and S14.

Binds the lower part of the 30S subunit head. Binds mRNA in the 70S ribosome, positioning it for translation. The polypeptide is Small ribosomal subunit protein uS3 (Rhizobium meliloti (strain 1021) (Ensifer meliloti)).